Reading from the N-terminus, the 494-residue chain is Lysine--tRNA ligase (494 aa).

Residues Glu-399 and Glu-406 each contribute to the Mg(2+) site.

The protein belongs to the class-II aminoacyl-tRNA synthetase family. It depends on Mg(2+) as a cofactor.

It is found in the cytoplasm. It carries out the reaction tRNA(Lys) + L-lysine + ATP = L-lysyl-tRNA(Lys) + AMP + diphosphate. The protein is Lysine--tRNA ligase (lysS) of Saccharolobus solfataricus (strain ATCC 35092 / DSM 1617 / JCM 11322 / P2) (Sulfolobus solfataricus).